A 198-amino-acid chain; its full sequence is Proteasome subunit beta 1 (198 aa).

Positions Met1–Ala8 are cleaved as a propeptide — removed in mature form; by autocatalysis. The active-site Nucleophile is the Thr9.

The protein belongs to the peptidase T1B family. As to quaternary structure, the 20S proteasome core is composed of 14 alpha and 14 beta subunits that assemble into four stacked heptameric rings, resulting in a barrel-shaped structure. The two inner rings, each composed of seven catalytic beta subunits, are sandwiched by two outer rings, each composed of seven alpha subunits. The catalytic chamber with the active sites is on the inside of the barrel. Has a gated structure, the ends of the cylinder being occluded by the N-termini of the alpha-subunits. Is capped at one or both ends by the proteasome regulatory ATPase, PAN.

The protein resides in the cytoplasm. It carries out the reaction Cleavage of peptide bonds with very broad specificity.. Its activity is regulated as follows. The formation of the proteasomal ATPase PAN-20S proteasome complex, via the docking of the C-termini of PAN into the intersubunit pockets in the alpha-rings, triggers opening of the gate for substrate entry. Interconversion between the open-gate and close-gate conformations leads to a dynamic regulation of the 20S proteasome proteolysis activity. Component of the proteasome core, a large protease complex with broad specificity involved in protein degradation. This is Proteasome subunit beta 1 from Nitrosopumilus maritimus (strain SCM1).